The following is a 136-amino-acid chain: ATP synthase F(0) complex subunit C1, mitochondrial (136 aa).

A mitochondrion-targeting transit peptide spans 1-61 (MQTTGALLIS…REFQTSVVSR (61 aa)). Residues 77-97 (VGVAGSGAGIGTVFGSLIIGY) form a helical membrane-spanning segment. Lys-104 carries the N6,N6,N6-trimethyllysine modification. A helical transmembrane segment spans residues 112 to 132 (ILGFALSEAMGLFCLMVAFLI).

It belongs to the ATPase C chain family. As to quaternary structure, homooctamer; the c-ring consists of eight c subunits forming a circle, and each subunit adopts a hairpin shape. Component of the ATP synthase complex composed at least of ATP5F1A/subunit alpha, ATP5F1B/subunit beta, ATP5MC1/subunit c (homooctomer), MT-ATP6/subunit a, MT-ATP8/subunit 8, ATP5ME/subunit e, ATP5MF/subunit f, ATP5MG/subunit g, ATP5MK/subunit k, ATP5MJ/subunit j, ATP5F1C/subunit gamma, ATP5F1D/subunit delta, ATP5F1E/subunit epsilon, ATP5PF/subunit F6, ATP5PB/subunit b, ATP5PD/subunit d, ATP5PO/subunit OSCP. ATP synthase complex consists of a soluble F(1) head domain (subunits alpha(3) and beta(3)) - the catalytic core - and a membrane F(0) domain - the membrane proton channel (subunits c, a, 8, e, f, g, k and j). These two domains are linked by a central stalk (subunits gamma, delta, and epsilon) rotating inside the F1 region and a stationary peripheral stalk (subunits F6, b, d, and OSCP). Interacts with TMEM70 (homooligomer form); this interaction facilitates the oligomer formation of subunit c/ATP5MC1 (c-ring) and the c-ring membrane insertion and also protects ATP5MC1 against intramitochondrial proteolysis. In terms of processing, trimethylated by ATPSCKMT at Lys-104. Methylation is required for proper incorporation of the C subunit into the ATP synthase complex and mitochondrial respiration.

The protein resides in the mitochondrion membrane. It carries out the reaction H(+)(in) = H(+)(out). Its function is as follows. Subunit c, of the mitochondrial membrane ATP synthase complex (F(1)F(0) ATP synthase or Complex V) that produces ATP from ADP in the presence of a proton gradient across the membrane which is generated by electron transport complexes of the respiratory chain. ATP synthase complex consist of a soluble F(1) head domain - the catalytic core - and a membrane F(1) domain - the membrane proton channel. These two domains are linked by a central stalk rotating inside the F(1) region and a stationary peripheral stalk. During catalysis, ATP synthesis in the catalytic domain of F(1) is coupled via a rotary mechanism of the central stalk subunits to proton translocation. With the subunit a (MT-ATP6), forms the proton-conducting channel in the F(0) domain, that contains two crucial half-channels (inlet and outlet) that facilitate proton movement from the mitochondrial intermembrane space (IMS) into the matrix. Protons are taken up via the inlet half-channel and released through the outlet half-channel, following a Grotthuss mechanism. This Bos taurus (Bovine) protein is ATP synthase F(0) complex subunit C1, mitochondrial.